The following is a 387-amino-acid chain: Dual specificity protein phosphatase MPK-4 (387 aa).

The segment covering 1–15 (MEQSQSQRQAWPSSS) has biased composition (polar residues). The tract at residues 1 to 27 (MEQSQSQRQAWPSSSAGGGKAQDSGVL) is disordered. One can recognise a Tyrosine-protein phosphatase domain in the interval 35 to 182 (GPVSIDEVDT…LKLFRRMGCK (148 aa)). Catalysis depends on Cys-126, which acts as the Phosphocysteine intermediate. Positions 248 to 267 (LEHKPRDRPPQEVVPKEKEE) are disordered.

Belongs to the protein-tyrosine phosphatase family. Non-receptor class dual specificity subfamily. As to quaternary structure, interacts (via tyrosine-protein phosphatase domain) with bsk/JNK; the interaction dephosphorylates bsk.

The protein localises to the nucleus. It localises to the cytoplasm. The enzyme catalyses O-phospho-L-tyrosyl-[protein] + H2O = L-tyrosyl-[protein] + phosphate. The catalysed reaction is O-phospho-L-seryl-[protein] + H2O = L-seryl-[protein] + phosphate. It carries out the reaction O-phospho-L-threonyl-[protein] + H2O = L-threonyl-[protein] + phosphate. With respect to regulation, inhibited by the tyrosine phosphatase inhibitor sodium vanadate. In terms of biological role, dual specificity phosphatase; can dephosphorylate both phosphotyrosine and phosphoserine or phosphothreonine residues. May suppress bsk/JNK activation during the immune response. This chain is Dual specificity protein phosphatase MPK-4, found in Drosophila melanogaster (Fruit fly).